We begin with the raw amino-acid sequence, 337 residues long: 4-hydroxyproline 2-epimerase 2 (337 aa).

Cys90 functions as the Proton acceptor in the catalytic mechanism. Residues 91–92 (GH), His223, and Asp249 contribute to the substrate site. Cys253 acts as the Proton donor in catalysis. Position 254 to 255 (254 to 255 (GT)) interacts with substrate.

Belongs to the proline racemase family.

It carries out the reaction trans-4-hydroxy-L-proline = cis-4-hydroxy-D-proline. Its function is as follows. Catalyzes the epimerization of trans-4-hydroxy-L-proline (t4LHyp) to cis-4-hydroxy-D-proline (c4DHyp). Is likely involved in a degradation pathway that converts t4LHyp to alpha-ketoglutarate. Can also catalyze the epimerization of trans-3-hydroxy-L-proline (t3LHyp) to cis-3-hydroxy-D-proline (c3DHyp), albeit with 170-fold lower efficiency. Displays no proline racemase activity. The polypeptide is 4-hydroxyproline 2-epimerase 2 (Brucella anthropi (strain ATCC 49188 / DSM 6882 / CCUG 24695 / JCM 21032 / LMG 3331 / NBRC 15819 / NCTC 12168 / Alc 37) (Ochrobactrum anthropi)).